A 432-amino-acid chain; its full sequence is Adenylosuccinate lyase (432 aa).

N(6)-(1,2-dicarboxyethyl)-AMP contacts are provided by residues 4-5 (RY), 67-69 (RHD), and 93-94 (TS). His141 functions as the Proton donor/acceptor in the catalytic mechanism. N(6)-(1,2-dicarboxyethyl)-AMP is bound at residue Gln212. The active-site Proton donor/acceptor is Ser262. Residues Ser263, 268–270 (KRN), Asn276, and 307–311 (SAERI) contribute to the N(6)-(1,2-dicarboxyethyl)-AMP site.

Belongs to the lyase 1 family. Adenylosuccinate lyase subfamily. In terms of assembly, homodimer and homotetramer. Residues from neighboring subunits contribute catalytic and substrate-binding residues to each active site.

The enzyme catalyses N(6)-(1,2-dicarboxyethyl)-AMP = fumarate + AMP. It catalyses the reaction (2S)-2-[5-amino-1-(5-phospho-beta-D-ribosyl)imidazole-4-carboxamido]succinate = 5-amino-1-(5-phospho-beta-D-ribosyl)imidazole-4-carboxamide + fumarate. The protein operates within purine metabolism; AMP biosynthesis via de novo pathway; AMP from IMP: step 2/2. It functions in the pathway purine metabolism; IMP biosynthesis via de novo pathway; 5-amino-1-(5-phospho-D-ribosyl)imidazole-4-carboxamide from 5-amino-1-(5-phospho-D-ribosyl)imidazole-4-carboxylate: step 2/2. Functionally, catalyzes two reactions in de novo purine nucleotide biosynthesis. Catalyzes the breakdown of 5-aminoimidazole- (N-succinylocarboxamide) ribotide (SAICAR or 2-[5-amino-1-(5-phospho-beta-D-ribosyl)imidazole-4-carboxamido]succinate) to 5-aminoimidazole-4-carboxamide ribotide (AICAR or 5-amino-1-(5-phospho-beta-D-ribosyl)imidazole-4-carboxamide) and fumarate, and of adenylosuccinate (ADS or N(6)-(1,2-dicarboxyethyl)-AMP) to adenosine monophosphate (AMP) and fumarate. The protein is Adenylosuccinate lyase (purB) of Streptococcus mutans serotype c (strain ATCC 700610 / UA159).